The sequence spans 534 residues: MRSIIALMRQREYFVQAIRRTTCVASPALNQTNFQASSFLTTLISSKKSPEETCIGSEEEEEEPNKCLSLRIEKLPKGVTVGSALQSWMGDGFPVHGGDVYHAINRLRKLGRNKRALELMEWIIRERPYRLGELEYSYLLEFTVKLHGVSQGEKLFTRVPQEFQNELLYNNLVIACLDQGVIRLALEYMKKMRELGYRTSHLVYNRLIIRNSAPGRRKLIAKDLALMKADKATPHVSTYHILMKLEANEHNIDGVLKAFDGMKKAGVEPNEVSYCILAMAHAVARLYTVAEAYTEEIEKSITGDNWSTLDILMILYGRLGKEKELARTWNVIRGFHHVRSKSYLLATEAFARVGNLDRAEELWLEMKNVKGLKETEQFNSLLSVYCKDGLIEKAIGVFREMTGNGFKPNSITYRHLALGCAKAKLMKEALKNIEMGLNLKTSKSIGSSTPWLETTLSIIECFAEKGDVENSEKLFEEVKNAKYNRYAFVYNALFKAYVKAKVYDPNLFKRMVLGGARPDAESYSLLKLVEQYKP.

Residues 1-20 (MRSIIALMRQREYFVQAIRR) constitute a mitochondrion transit peptide. 9 PPR repeats span residues 165-199 (NELL…GYRT), 200-234 (SHLV…KATP), 235-269 (HVST…GVEP), 270-300 (NEVS…IEKS), 305-335 (NWST…IRGF), 339-369 (RSKS…MKNV), 374-408 (ETEQ…GFKP), 409-443 (NSIT…KTSK), and 451-485 (WLET…KYNR).

The protein belongs to the PPR family. P subfamily.

It is found in the mitochondrion. The polypeptide is Pentatricopeptide repeat-containing protein At1g07590, mitochondrial (Arabidopsis thaliana (Mouse-ear cress)).